Consider the following 117-residue polypeptide: Large ribosomal subunit protein bL20 (117 aa).

It belongs to the bacterial ribosomal protein bL20 family.

Its function is as follows. Binds directly to 23S ribosomal RNA and is necessary for the in vitro assembly process of the 50S ribosomal subunit. It is not involved in the protein synthesizing functions of that subunit. In Mycoplasma mobile (strain ATCC 43663 / 163K / NCTC 11711) (Mesomycoplasma mobile), this protein is Large ribosomal subunit protein bL20.